Consider the following 110-residue polypeptide: DNA-binding protein Pars_1791 (110 aa).

It belongs to the PDCD5 family.

This Pyrobaculum arsenaticum (strain DSM 13514 / JCM 11321 / PZ6) protein is DNA-binding protein Pars_1791.